Here is a 362-residue protein sequence, read N- to C-terminus: Putative F-box protein At3g23260 (362 aa).

In terms of domain architecture, F-box spans 1–46 (MEWRSLPVELQEEILSRVPAKYLARLRSTSKQWNALSKTGSFAKKH).

This Arabidopsis thaliana (Mouse-ear cress) protein is Putative F-box protein At3g23260.